We begin with the raw amino-acid sequence, 518 residues long: GRIN2-like protein (518 aa).

Disordered regions lie at residues 1 to 23 (MGLESVVQTMNNQSPDNNSQSRT) and 467 to 500 (QTEPAQQTGKSDEDPLNKEPSSDKMEKKRPFRTM). Basic and acidic residues predominate over residues 476–494 (KSDEDPLNKEPSSDKMEKK).

In terms of assembly, may interact with GNAO1.

May be involved in neurite outgrowth. The sequence is that of GRIN2-like protein from Gallus gallus (Chicken).